We begin with the raw amino-acid sequence, 149 residues long: MQVILLDKVVHLGNIGDQVNVKSGFARNFLIPQGKAVMATKANIEYFEARRAELEAKAAEVLAAAQARAAKLAELGSVTIASKAGDEGRLFGSITTRDVADAVTAAGVEVAKSEVRLSTGPIRTLGDHEVKFQLHGEVFATINVIVVAE.

The protein belongs to the bacterial ribosomal protein bL9 family.

Functionally, binds to the 23S rRNA. This is Large ribosomal subunit protein bL9 from Pasteurella multocida (strain Pm70).